A 223-amino-acid polypeptide reads, in one-letter code: Protein-disulfide oxidoreductase DsbI (223 aa).

A helical membrane pass occupies residues 26–46 (LLWLLMAVAMGALIILAHSFF). An intrachain disulfide couples Cys55 to Cys58. The next 2 membrane-spanning stretches (helical) occupy residues 59–78 (VYIR…AAIN) and 82–102 (IILK…GLKF). An intrachain disulfide couples Cys127 to Cys153. A helical transmembrane segment spans residues 198–218 (CMLAFGMCLVLLVIMSGAWAL).

Belongs to the DsbB family. DsbI subfamily. In terms of assembly, interacts with DsbL.

The protein localises to the cell inner membrane. Its function is as follows. Required for disulfide bond formation in some proteins. Part of a redox system composed of DsbI and DsbL that mediates formation of an essential disulfide bond in AssT. This chain is Protein-disulfide oxidoreductase DsbI, found in Escherichia coli O1:K1 / APEC.